The sequence spans 121 residues: MSRVKGGTVTHARHKKVLKAAKGYYGRRKSSFKVATQAVDKANQYATRDRKARKRNFRALWIQRINAAVRSHDEALTYSRFINGLNLAGIEVDRKVLADLAVHEPEAFGAIVAQAQAALAA.

It belongs to the bacterial ribosomal protein bL20 family.

Its function is as follows. Binds directly to 23S ribosomal RNA and is necessary for the in vitro assembly process of the 50S ribosomal subunit. It is not involved in the protein synthesizing functions of that subunit. The polypeptide is Large ribosomal subunit protein bL20 (Ruegeria pomeroyi (strain ATCC 700808 / DSM 15171 / DSS-3) (Silicibacter pomeroyi)).